The chain runs to 1908 residues: Putative ankyrin repeat protein L484 (1908 aa).

5 ANK repeats span residues 20–50 (DIME…KFNI), 60–97 (PNKT…PMDL), 101–130 (DNVW…SIDR), 134–167 (SNNT…DIDK), and 1370–1399 (DGNT…NPFT). A coiled-coil region spans residues 1539-1603 (VQLLNPKLRD…QTNISDLEFK (65 aa)).

It localises to the virion. In Acanthamoeba polyphaga mimivirus (APMV), this protein is Putative ankyrin repeat protein L484.